A 649-amino-acid chain; its full sequence is Solute carrier family 22 member 16 (649 aa).

Residues 19 to 39 (FQIVLYLICAYQSLSCGIHYL) form a helical membrane-spanning segment. N-linked (GlcNAc...) asparagine glycans are attached at residues Asn-65 and Asn-108. Helical transmembrane passes span 156 to 176 (MIQP…SYLS), 190 to 210 (IGVF…SFMI), 214 to 234 (FLVM…MEII), 244 to 264 (IHLN…SYLL), and 268 to 288 (WLYQ…CWML). A glycan (N-linked (GlcNAc...) asparagine) is linked at Asn-315. Transmembrane regions (helical) follow at residues 356–376 (AKMT…YYMF), 389–409 (LYLL…CIWL), 417–437 (TMLL…VMPS), 445–465 (MVAL…YLYT), 475–495 (CLAV…IPFT), and 501–521 (VWIF…GLLS). Residues 530-544 (TPMKSTWETTEQQVP) are compositionally biased toward polar residues. Disordered stretches follow at residues 530 to 560 (TPMK…SFER) and 579 to 649 (SPDA…LGGF).

Belongs to the major facilitator (TC 2.A.1) superfamily. Organic cation transporter (TC 2.A.1.19) family.

The protein resides in the cell membrane. It carries out the reaction (R)-carnitine(in) = (R)-carnitine(out). The catalysed reaction is spermidine(in) = spermidine(out). Functionally, facilitative organic cation transporter that mediates the transport of carnitine as well as the polyamine spermidine. Mediates the partially Na(+)-dependent bidirectional transport of carnitine. May mediate L-carnitine secretion from testis epididymal epithelium into the lumen which is involved in the maturation of spermatozoa. This chain is Solute carrier family 22 member 16, found in Mus musculus (Mouse).